Consider the following 254-residue polypeptide: Hydroxyethylthiazole kinase (254 aa).

Met-40 lines the substrate pocket. ATP-binding residues include Arg-116 and Ser-162. Position 189 (Gly-189) interacts with substrate.

Belongs to the Thz kinase family. Mg(2+) is required as a cofactor.

The enzyme catalyses 5-(2-hydroxyethyl)-4-methylthiazole + ATP = 4-methyl-5-(2-phosphooxyethyl)-thiazole + ADP + H(+). It functions in the pathway cofactor biosynthesis; thiamine diphosphate biosynthesis; 4-methyl-5-(2-phosphoethyl)-thiazole from 5-(2-hydroxyethyl)-4-methylthiazole: step 1/1. In terms of biological role, catalyzes the phosphorylation of the hydroxyl group of 4-methyl-5-beta-hydroxyethylthiazole (THZ). The chain is Hydroxyethylthiazole kinase from Limosilactobacillus fermentum (strain NBRC 3956 / LMG 18251) (Lactobacillus fermentum).